A 282-amino-acid polypeptide reads, in one-letter code: Sulfur carrier protein FdhD (282 aa).

Cys115 functions as the Cysteine persulfide intermediate in the catalytic mechanism.

Belongs to the FdhD family.

It is found in the cytoplasm. Functionally, required for formate dehydrogenase (FDH) activity. Acts as a sulfur carrier protein that transfers sulfur from IscS to the molybdenum cofactor prior to its insertion into FDH. The polypeptide is Sulfur carrier protein FdhD (Streptomyces coelicolor (strain ATCC BAA-471 / A3(2) / M145)).